The sequence spans 90 residues: LYR motif-containing protein 2 (90 aa).

The transit peptide at 1-19 (MASSRLPASALTLKQFIQR) directs the protein to the mitochondrion.

This sequence belongs to the complex I LYR family.

The protein localises to the mitochondrion. Involved in efficient integration of the N-module into mitochondrial respiratory chain complex I. This Salmo salar (Atlantic salmon) protein is LYR motif-containing protein 2 (lyrm2).